Here is a 507-residue protein sequence, read N- to C-terminus: Subtilisin-like protease 1 (507 aa).

Positions 1-19 (MGVFRFISISLAAVSAANA) are cleaved as a signal peptide. The propeptide occupies 20–116 (AQILSMPHAQ…VEPDTIISVN (97 aa)). Positions 34–113 (SYIVMMKDDT…VMFVEPDTII (80 aa)) constitute an Inhibitor I9 domain. The region spanning 126 to 400 (SWGLARISNS…NVLISNGGAK (275 aa)) is the Peptidase S8 domain. Catalysis depends on charge relay system residues D158 and H190. Residues 175 to 198 (GSNQVNDGDDRDGSGHGTHTSGTM) form a disordered region. An N-linked (GlcNAc...) asparagine glycan is attached at N251. Residues 282-294 (NENQDARSSSPAS) show a composition bias toward polar residues. The segment at 282-312 (NENQDARSSSPASEPSVCTVGSSAEDDSRSS) is disordered. Residue S345 is the Charge relay system of the active site. A compositionally biased stretch (polar residues) spans 378-394 (SSSITDVGPGTPTNVLI). A disordered region spans residues 378 to 486 (SSSITDVGPG…YPGGDNFDFD (109 aa)). 2 stretches are compositionally biased toward pro residues: residues 405–428 (KPAP…PSQP) and 438–449 (EPFPGEPFPGEP). Low complexity predominate over residues 450-461 (FPGESSPGESAP). Positions 462-476 (APAPMPPSPQHPHTP) are enriched in pro residues.

The protein belongs to the peptidase S8 family.

It is found in the secreted. In terms of biological role, secreted subtilisin-like serine protease with keratinolytic activity that contributes to pathogenicity. The sequence is that of Subtilisin-like protease 1 (SUB1) from Trichophyton equinum (Horse ringworm fungus).